Reading from the N-terminus, the 622-residue chain is MSTEHKQYLSAVTLAAIGVVYGDIGTSPLYTLRECFSGHYGFDVRPDVVFGFLSLIFWMLILVVSVKYLTYVMRADNAGEGGILTLMSLAGRNISSRATSILVVLGLIGGSFFYGEVVITPAISVMSAIEGLEIAAPALDPYIVPCSIAVLTLLFVIQKHGTGSVGKLFAPVMLVWFLTLALLGLRSIIANPEVLAALNPKWAISFFVEYKSVSFFALGAVVLAITGVEALYADMGHFGKFPIRLAWFTVVLPSLVLNYFGQGALLLKNPEAIKNPFFLLAPDWALIPLLILATLATVIASQAVISGVFSLTRQAVRLGYLPPMRIIHTSEMESGQIYIPVINWTLYLAVVLVIIGFERSSNLAAAYGIAVTGTMVITSILFCTVAWKNWHWNRFLVVFLLMVLLIIDIPMFSANVLKLFSGGWLPLSLGLVMFIIMTTWKSERFSLLRRMHEHSNSLEAMIASLEKSPPVRVPGTAVYMSRAMNVIPFALLHNLKHNKVLHERVVLLTMRTDDVPYVHNVERVTIEQLSPTFWRVVARYGWRETPNVAEIFHRCGLEGLSCQMMETSFFMSHESLILTKRPWHLFLRGKLFIALSRNALRAPDQFEIPPNRVIELGTQVEI.

12 helical membrane-spanning segments follow: residues 9–29 (LSAVTLAAIGVVYGDIGTSPL), 46–66 (PDVVFGFLSLIFWMLILVVSV), 101–121 (ILVVLGLIGGSFFYGEVVITP), 137–157 (PALDPYIVPCSIAVLTLLFVI), 165–185 (VGKLFAPVMLVWFLTLALLGL), 213–233 (VSFFALGAVVLAITGVEALYA), 247–267 (WFTVVLPSLVLNYFGQGALLL), 276–296 (PFFLLAPDWALIPLLILATLA), 337–357 (IYIPVINWTLYLAVVLVIIGF), 363–383 (LAAAYGIAVTGTMVITSILFC), 395–415 (FLVVFLLMVLLIIDIPMFSAN), and 416–436 (VLKLFSGGWLPLSLGLVMFII).

It belongs to the HAK/KUP transporter (TC 2.A.72) family.

The protein resides in the cell inner membrane. The enzyme catalyses K(+)(in) + H(+)(in) = K(+)(out) + H(+)(out). In terms of biological role, responsible for the low-affinity transport of potassium into the cell. Likely operates as a K(+):H(+) symporter. In Yersinia pestis (strain Pestoides F), this protein is Low affinity potassium transport system protein Kup.